The sequence spans 464 residues: 3-deoxy-D-manno-octulosonic acid transferase (464 aa).

Residues 2–22 (MLLYYALSFILLPVYFIIILI) form a helical; Signal-anchor membrane-spanning segment. Residues 47–93 (DSLDFMQTSANKEEFKGDTSLRTTTYTLIREDEGLGSTYKLPLEASD) form the RPE1 insert domain. The Proton acceptor role is filled by Glu-107. CMP contacts are provided by residues 311–312 (PR), 352–354 (FGE), and 377–380 (NILE).

Belongs to the glycosyltransferase group 1 family. Glycosyltransferase 30 subfamily.

The protein localises to the cell inner membrane. It carries out the reaction lipid IVA (E. coli) + CMP-3-deoxy-beta-D-manno-octulosonate = alpha-Kdo-(2-&gt;6)-lipid IVA (E. coli) + CMP + H(+). Its pathway is bacterial outer membrane biogenesis; LPS core biosynthesis. Its function is as follows. Involved in lipopolysaccharide (LPS) biosynthesis. Catalyzes the transfer of 3-deoxy-D-manno-octulosonate (Kdo) residue(s) from CMP-Kdo to lipid IV(A), the tetraacyldisaccharide-1,4'-bisphosphate precursor of lipid A. This chain is 3-deoxy-D-manno-octulosonic acid transferase (waaA), found in Rickettsia conorii (strain ATCC VR-613 / Malish 7).